Consider the following 1085-residue polypeptide: DNA-directed RNA polymerase subunit beta (1085 aa).

It belongs to the RNA polymerase beta chain family. As to quaternary structure, in plastids the minimal PEP RNA polymerase catalytic core is composed of four subunits: alpha, beta, beta', and beta''. When a (nuclear-encoded) sigma factor is associated with the core the holoenzyme is formed, which can initiate transcription.

It localises to the plastid. It is found in the chloroplast. The catalysed reaction is RNA(n) + a ribonucleoside 5'-triphosphate = RNA(n+1) + diphosphate. Its function is as follows. DNA-dependent RNA polymerase catalyzes the transcription of DNA into RNA using the four ribonucleoside triphosphates as substrates. The chain is DNA-directed RNA polymerase subunit beta from Physcomitrium patens (Spreading-leaved earth moss).